The sequence spans 360 residues: UDP-N-acetylglucosamine--N-acetylmuramyl-(pentapeptide) pyrophosphoryl-undecaprenol N-acetylglucosamine transferase (360 aa).

2 residues coordinate UDP-N-acetyl-alpha-D-glucosamine: Ser198 and Gln289.

It belongs to the glycosyltransferase 28 family. MurG subfamily.

The protein localises to the cell membrane. The catalysed reaction is Mur2Ac(oyl-L-Ala-gamma-D-Glu-L-Lys-D-Ala-D-Ala)-di-trans,octa-cis-undecaprenyl diphosphate + UDP-N-acetyl-alpha-D-glucosamine = beta-D-GlcNAc-(1-&gt;4)-Mur2Ac(oyl-L-Ala-gamma-D-Glu-L-Lys-D-Ala-D-Ala)-di-trans,octa-cis-undecaprenyl diphosphate + UDP + H(+). It participates in cell wall biogenesis; peptidoglycan biosynthesis. Its function is as follows. Cell wall formation. Catalyzes the transfer of a GlcNAc subunit on undecaprenyl-pyrophosphoryl-MurNAc-pentapeptide (lipid intermediate I) to form undecaprenyl-pyrophosphoryl-MurNAc-(pentapeptide)GlcNAc (lipid intermediate II). The protein is UDP-N-acetylglucosamine--N-acetylmuramyl-(pentapeptide) pyrophosphoryl-undecaprenol N-acetylglucosamine transferase of Streptococcus pyogenes serotype M12 (strain MGAS2096).